Consider the following 220-residue polypeptide: Large ribosomal subunit protein uL3 (220 aa).

Residues 132 to 153 (SGRASHGNSRSHNVPGSIGMAQ) are disordered. Positions 133-145 (GRASHGNSRSHNV) are enriched in polar residues. Position 153 is an N5-methylglutamine (glutamine 153).

It belongs to the universal ribosomal protein uL3 family. As to quaternary structure, part of the 50S ribosomal subunit. Forms a cluster with proteins L14 and L19. Post-translationally, methylated by PrmB.

Functionally, one of the primary rRNA binding proteins, it binds directly near the 3'-end of the 23S rRNA, where it nucleates assembly of the 50S subunit. This chain is Large ribosomal subunit protein uL3, found in Ralstonia nicotianae (strain ATCC BAA-1114 / GMI1000) (Ralstonia solanacearum).